A 600-amino-acid polypeptide reads, in one-letter code: Elongation factor 4 (600 aa).

Residues K5–K187 form the tr-type G domain. GTP contacts are provided by residues D17–T22 and N134–D137.

It belongs to the TRAFAC class translation factor GTPase superfamily. Classic translation factor GTPase family. LepA subfamily.

The protein localises to the cell inner membrane. It carries out the reaction GTP + H2O = GDP + phosphate + H(+). In terms of biological role, required for accurate and efficient protein synthesis under certain stress conditions. May act as a fidelity factor of the translation reaction, by catalyzing a one-codon backward translocation of tRNAs on improperly translocated ribosomes. Back-translocation proceeds from a post-translocation (POST) complex to a pre-translocation (PRE) complex, thus giving elongation factor G a second chance to translocate the tRNAs correctly. Binds to ribosomes in a GTP-dependent manner. This chain is Elongation factor 4, found in Rickettsia bellii (strain OSU 85-389).